Reading from the N-terminus, the 398-residue chain is Ribosomal RNA large subunit methyltransferase F (398 aa).

A compositionally biased stretch (basic residues) spans 1–12 (MTPSRKPARPGA). A disordered region spans residues 1–85 (MTPSRKPARP…RNLHGQGYDF (85 aa)). 2 stretches are compositionally biased toward low complexity: residues 20–40 (PSAKASRPKPSSQSKSKAQPK) and 48–59 (QAKSQAKPQAKS).

This sequence belongs to the methyltransferase superfamily. METTL16/RlmF family.

The protein localises to the cytoplasm. The catalysed reaction is adenosine(1618) in 23S rRNA + S-adenosyl-L-methionine = N(6)-methyladenosine(1618) in 23S rRNA + S-adenosyl-L-homocysteine + H(+). Specifically methylates the adenine in position 1618 of 23S rRNA. This Shewanella loihica (strain ATCC BAA-1088 / PV-4) protein is Ribosomal RNA large subunit methyltransferase F.